Consider the following 228-residue polypeptide: MSVERTLHHFPLDPASRQVRLALGEKRLPFVEMQVRYWEMPPEFTSLNPSGMPPVLVETKHQRNLVICETRAILEHIEETETEPPLLGRDPAERAEARRLLQWFDRKFDNEVNGFLLHEKMEKRLLRMGAPDLAALRQGREALRMHLGYIESLLQTRDWLAGRRMSLADFAAAAHLSVIDYFGDVPWKDFQAAKTWYMKLKSRPCFRPILADRWPGLAPAAHYDDLDF.

The GST N-terminal domain maps to 3-85 (VERTLHHFPL…HIEETETEPP (83 aa)). The GST C-terminal domain maps to 90-223 (DPAERAEARR…WPGLAPAAHY (134 aa)).

Belongs to the GST superfamily. Homodimer. Interacts with FtsZ filaments. Probably interacts with the GTPase domain of FtsZ.

The protein localises to the cytoplasm. In terms of biological role, essential cell division protein that must bind to FtsZ for division to occur. Critical coordinator of envelope constriction through its interaction with FtsZ. Promotes the formation of highly curved FtsZ filaments, reduces the GTPase activity of FtsZ and stabilizes FtsZ polymers. May regulate FtsZ function by modulating its superstructure. Does not bind to glutathione. This chain is FtsZ-localized protein A, found in Caulobacter vibrioides (strain NA1000 / CB15N) (Caulobacter crescentus).